Reading from the N-terminus, the 252-residue chain is MDVKSVLSNAFAMPITSPAFPMGPYRFINREFLIITYRTDPDKLRAVVPEPLEIGEPLVHYEFIRMPDSTGFGDYTESGQVIPVSYKGVAGGYTLAMYLDDHPPIAGGRELWGFPKKLANPVLAVHTDTLVGTLDYGPVRIATGTMGYKHRQLDLAQQKKRLETPNFLLKVIPHVDGTPRICELVRYYLQDIDLKGAWTGPAALELAHHALAPVAELPVLEIVEARHLLADLTLGLGEVVFDYLDQPEANAR.

K116 (schiff-base intermediate with acetoacetate) is an active-site residue.

It belongs to the ADC family.

The catalysed reaction is acetoacetate + H(+) = acetone + CO2. In terms of biological role, catalyzes the conversion of acetoacetate to acetone and carbon dioxide. This is Acetoacetate decarboxylase from Paraburkholderia phytofirmans (strain DSM 17436 / LMG 22146 / PsJN) (Burkholderia phytofirmans).